A 576-amino-acid chain; its full sequence is Calcium-dependent protein kinase 11 (576 aa).

The N-myristoyl glycine moiety is linked to residue glycine 2. Residues proline 27 to arginine 88 form a disordered region. Residues alanine 41 to glutamate 56 are compositionally biased toward low complexity. The region spanning tyrosine 113–valine 371 is the Protein kinase domain. ATP-binding positions include leucine 119–threonine 127 and lysine 142. Catalysis depends on aspartate 237, which acts as the Proton acceptor. The segment at alanine 377–isoleucine 407 is autoinhibitory domain. EF-hand domains are found at residues glutamate 414–asparagine 449, leucine 450–valine 485, glutamate 486–glycine 521, and aspartate 522–alanine 555. Ca(2+)-binding residues include aspartate 427, aspartate 429, serine 431, histidine 433, glutamate 438, aspartate 463, aspartate 465, serine 467, threonine 469, glutamate 474, aspartate 499, aspartate 501, serine 503, tyrosine 505, glutamate 510, aspartate 533, aspartate 535, aspartate 537, arginine 539, and glutamate 544.

It belongs to the protein kinase superfamily. Ser/Thr protein kinase family. CDPK subfamily.

The protein localises to the membrane. The enzyme catalyses L-seryl-[protein] + ATP = O-phospho-L-seryl-[protein] + ADP + H(+). It carries out the reaction L-threonyl-[protein] + ATP = O-phospho-L-threonyl-[protein] + ADP + H(+). Activated by calcium. Autophosphorylation may play an important role in the regulation of the kinase activity. Functionally, may play a role in signal transduction pathways that involve calcium as a second messenger. The sequence is that of Calcium-dependent protein kinase 11 from Oryza sativa subsp. japonica (Rice).